The sequence spans 715 residues: Phosphoribosylformylglycinamidine synthase subunit PurL (715 aa).

His33 is a catalytic residue. Tyr36 is a binding site for ATP. Glu77 contributes to the Mg(2+) binding site. Residues 78–81 and Arg100 each bind substrate; that span reads SHNH. His79 (proton acceptor) is an active-site residue. Asp101 is a Mg(2+) binding site. Gln225 contacts substrate. Asp253 provides a ligand contact to Mg(2+). Residue 297–299 participates in substrate binding; it reads ESQ. ATP-binding residues include Asn476 and Gly513. Asn514 serves as a coordination point for Mg(2+). Residue Ser516 participates in substrate binding.

Belongs to the FGAMS family. In terms of assembly, monomer. Part of the FGAM synthase complex composed of 1 PurL, 1 PurQ and 2 PurS subunits.

The protein localises to the cytoplasm. The catalysed reaction is N(2)-formyl-N(1)-(5-phospho-beta-D-ribosyl)glycinamide + L-glutamine + ATP + H2O = 2-formamido-N(1)-(5-O-phospho-beta-D-ribosyl)acetamidine + L-glutamate + ADP + phosphate + H(+). It participates in purine metabolism; IMP biosynthesis via de novo pathway; 5-amino-1-(5-phospho-D-ribosyl)imidazole from N(2)-formyl-N(1)-(5-phospho-D-ribosyl)glycinamide: step 1/2. Its function is as follows. Part of the phosphoribosylformylglycinamidine synthase complex involved in the purines biosynthetic pathway. Catalyzes the ATP-dependent conversion of formylglycinamide ribonucleotide (FGAR) and glutamine to yield formylglycinamidine ribonucleotide (FGAM) and glutamate. The FGAM synthase complex is composed of three subunits. PurQ produces an ammonia molecule by converting glutamine to glutamate. PurL transfers the ammonia molecule to FGAR to form FGAM in an ATP-dependent manner. PurS interacts with PurQ and PurL and is thought to assist in the transfer of the ammonia molecule from PurQ to PurL. This Methanosarcina barkeri (strain Fusaro / DSM 804) protein is Phosphoribosylformylglycinamidine synthase subunit PurL.